Reading from the N-terminus, the 155-residue chain is Ciliary microtubule inner protein 2C (155 aa).

Belongs to the CIMIP2 family.

It localises to the cytoplasm. Its subcellular location is the cytoskeleton. The protein localises to the cilium axoneme. Functionally, microtubule inner protein (MIP) part of the dynein-decorated doublet microtubules (DMTs) in cilia axoneme, which is required for motile cilia beating. This is Ciliary microtubule inner protein 2C (cimip2ca) from Xenopus laevis (African clawed frog).